Here is a 140-residue protein sequence, read N- to C-terminus: Cysteine desulfuration protein SufE (140 aa).

Cys-51 acts as the Cysteine persulfide intermediate in catalysis.

This sequence belongs to the SufE family. As to quaternary structure, homodimer. Interacts with SufS.

It localises to the cytoplasm. The protein operates within cofactor biosynthesis; iron-sulfur cluster biosynthesis. Functionally, participates in cysteine desulfuration mediated by SufS. Cysteine desulfuration mobilizes sulfur from L-cysteine to yield L-alanine and constitutes an essential step in sulfur metabolism for biosynthesis of a variety of sulfur-containing biomolecules. Functions as a sulfur acceptor for SufS, by mediating the direct transfer of the sulfur atom from the S-sulfanylcysteine of SufS, an intermediate product of cysteine desulfuration process. The protein is Cysteine desulfuration protein SufE of Yersinia enterocolitica serotype O:8 / biotype 1B (strain NCTC 13174 / 8081).